The sequence spans 184 residues: Ribosome-recycling factor (184 aa).

This sequence belongs to the RRF family.

It localises to the cytoplasm. Functionally, responsible for the release of ribosomes from messenger RNA at the termination of protein biosynthesis. May increase the efficiency of translation by recycling ribosomes from one round of translation to another. The chain is Ribosome-recycling factor from Bifidobacterium adolescentis (strain ATCC 15703 / DSM 20083 / NCTC 11814 / E194a).